A 469-amino-acid chain; its full sequence is 3-isopropylmalate dehydratase large subunit (469 aa).

[4Fe-4S] cluster is bound by residues cysteine 349, cysteine 410, and cysteine 413.

It belongs to the aconitase/IPM isomerase family. LeuC type 1 subfamily. As to quaternary structure, heterodimer of LeuC and LeuD. Requires [4Fe-4S] cluster as cofactor.

It carries out the reaction (2R,3S)-3-isopropylmalate = (2S)-2-isopropylmalate. It participates in amino-acid biosynthesis; L-leucine biosynthesis; L-leucine from 3-methyl-2-oxobutanoate: step 2/4. Its function is as follows. Catalyzes the isomerization between 2-isopropylmalate and 3-isopropylmalate, via the formation of 2-isopropylmaleate. The polypeptide is 3-isopropylmalate dehydratase large subunit (Neisseria meningitidis serogroup C / serotype 2a (strain ATCC 700532 / DSM 15464 / FAM18)).